A 196-amino-acid chain; its full sequence is Protein GrpE (196 aa).

A disordered region spans residues 1 to 24 (MAENERTTENFQPQDPSYAEAATT).

The protein belongs to the GrpE family. As to quaternary structure, homodimer.

The protein resides in the cytoplasm. Participates actively in the response to hyperosmotic and heat shock by preventing the aggregation of stress-denatured proteins, in association with DnaK and GrpE. It is the nucleotide exchange factor for DnaK and may function as a thermosensor. Unfolded proteins bind initially to DnaJ; upon interaction with the DnaJ-bound protein, DnaK hydrolyzes its bound ATP, resulting in the formation of a stable complex. GrpE releases ADP from DnaK; ATP binding to DnaK triggers the release of the substrate protein, thus completing the reaction cycle. Several rounds of ATP-dependent interactions between DnaJ, DnaK and GrpE are required for fully efficient folding. The chain is Protein GrpE from Gloeobacter violaceus (strain ATCC 29082 / PCC 7421).